A 478-amino-acid chain; its full sequence is Microfibrillar-associated protein 1 (478 aa).

Residues 1-20 (MSAATAAAAASGIQSTAGAI) show a composition bias toward low complexity. Disordered regions lie at residues 1-276 (MSAA…RRAT) and 456-478 (NEHAGGMRQQFDKPTGSKRKKME). Residues 53–62 (SSEESDDDDF) are compositionally biased toward acidic residues. A compositionally biased stretch (basic and acidic residues) spans 107–128 (DDPRLRRLRQRPVDMEDMERER). Residues 140–153 (IMESDSEDEEEDEG) show a composition bias toward acidic residues. The segment covering 160–170 (RGTNKITLASE) has biased composition (polar residues). Residues 171–181 (SDTDAELSDTE) are compositionally biased toward acidic residues. The span at 197–212 (QREEEVLQKEDEKQSE) shows a compositional bias: basic and acidic residues. Over residues 214–231 (SESESSEYEEETESEEDN) the composition is skewed to acidic residues. The interaction with Prp38 stretch occupies residues 229-478 (EDNEPRLKPL…PTGSKRKKME (250 aa)). Positions 245–268 (RATIQEKEREAQKQKQLEAEAKRA) are enriched in basic and acidic residues.

This sequence belongs to the MFAP1 family. In terms of assembly, component of the spliceosome B complex. Interacts (via C-terminus) with Prp38.

It is found in the nucleus. In terms of biological role, required for pre-mRNA splicing. The chain is Microfibrillar-associated protein 1 from Drosophila melanogaster (Fruit fly).